Here is a 317-residue protein sequence, read N- to C-terminus: Gamma-glutamyl hydrolase (317 aa).

A signal peptide spans 1–24 (MASLGRLLCAWVLLLCGLASPGLS). The Gamma-glutamyl hydrolase domain occupies 25–317 (GSYERGSKRP…SSFQQAYMFN (293 aa)). N-linked (GlcNAc...) asparagine glycans are attached at residues asparagine 46 and asparagine 100. Cysteine 133 acts as the Nucleophile in catalysis. 4 N-linked (GlcNAc...) asparagine glycosylation sites follow: asparagine 153, asparagine 162, asparagine 188, and asparagine 202. The active-site Proton donor is the histidine 243. An N-linked (GlcNAc...) asparagine glycan is attached at asparagine 306.

The protein belongs to the peptidase C26 family. As to quaternary structure, homodimer.

The protein localises to the secreted. It is found in the extracellular space. The protein resides in the lysosome. It localises to the melanosome. The enzyme catalyses (6S)-5,6,7,8-tetrahydrofolyl-(gamma-L-Glu)(n) + (n-1) H2O = (6S)-5,6,7,8-tetrahydrofolate + (n-1) L-glutamate. Its activity is regulated as follows. Activity is altered by insulin and estrogen. In terms of biological role, hydrolyzes the polyglutamate sidechains of pteroylpolyglutamates. Progressively removes gamma-glutamyl residues from pteroylpoly-gamma-glutamate to yield pteroyl-alpha-glutamate (folic acid) and free glutamate. May play an important role in the bioavailability of dietary pteroylpolyglutamates and in the metabolism of pteroylpolyglutamates and antifolates. Exhibits either endo- or exopeptidase activity depending upon the tissue of origin. When secreted, it acts primarily as an endopeptidase. This Rattus norvegicus (Rat) protein is Gamma-glutamyl hydrolase (Ggh).